We begin with the raw amino-acid sequence, 409 residues long: MDKLLERFLHYVSLDTQSKSGVRQVPSTEGQWKLLRLLKQQLEEMGLVNITLSEKGTLMATLPANVEGDIPAIGFISHVDTSPDFSGKNVNPQIVENYRGGDIALGIGDEVLSPVMFPVLHQLLGQTLITTDGKTLLGADDKAGVAEIMTALAVLKGNPIPHGEIKVAFTPDEEVGKGAKHFDVEAFGAQWAYTVDGGGVGELEFENFNAASVNIKIVGNNVHPGTAKGVMVNALSLAARIHAEVPADEAPETTEGYEGFYHLASMKGTVDRAEMHYIIRDFDRKQFEARKRKMMEIAKKVGKGLHPDCYIELVIEDSYYNMREKVVEHPHILDIAQQAMRDCHITPEMKPIRGGTDGAQLSFMGLPCPNLFTGGYNYHGKHEFVTLEGMEKAVQVIVRIAELTAKRGQ.

H78 lines the Zn(2+) pocket. D80 is a catalytic residue. D140 serves as a coordination point for Zn(2+). The active-site Proton acceptor is E173. Residues E174, D196, and H379 each contribute to the Zn(2+) site.

Belongs to the peptidase M20B family. Zn(2+) serves as cofactor.

The protein localises to the cytoplasm. The catalysed reaction is Release of the N-terminal residue from a tripeptide.. Cleaves the N-terminal amino acid of tripeptides. In Salmonella choleraesuis (strain SC-B67), this protein is Peptidase T.